A 200-amino-acid chain; its full sequence is Proteasome subunit beta 2 (200 aa).

Residues 1–10 (MSDQLELMTG) constitute a propeptide, removed in mature form; by autocatalysis. T11 serves as the catalytic Nucleophile.

The protein belongs to the peptidase T1B family. In terms of assembly, the 20S proteasome core is composed of 14 alpha and 14 beta subunits that assemble into four stacked heptameric rings, resulting in a barrel-shaped structure. The two inner rings, each composed of seven catalytic beta subunits, are sandwiched by two outer rings, each composed of seven alpha subunits. The catalytic chamber with the active sites is on the inside of the barrel. Has a gated structure, the ends of the cylinder being occluded by the N-termini of the alpha-subunits. Is capped at one or both ends by the proteasome regulatory ATPase, PAN.

The protein localises to the cytoplasm. It carries out the reaction Cleavage of peptide bonds with very broad specificity.. Its activity is regulated as follows. The formation of the proteasomal ATPase PAN-20S proteasome complex, via the docking of the C-termini of PAN into the intersubunit pockets in the alpha-rings, triggers opening of the gate for substrate entry. Interconversion between the open-gate and close-gate conformations leads to a dynamic regulation of the 20S proteasome proteolysis activity. In terms of biological role, component of the proteasome core, a large protease complex with broad specificity involved in protein degradation. The protein is Proteasome subunit beta 2 of Caldivirga maquilingensis (strain ATCC 700844 / DSM 13496 / JCM 10307 / IC-167).